A 520-amino-acid polypeptide reads, in one-letter code: GMP synthase [glutamine-hydrolyzing] (520 aa).

Residues 9–202 enclose the Glutamine amidotransferase type-1 domain; it reads TVLIVDFGSQ…IHNIAGIKGD (194 aa). The active-site Nucleophile is C86. Residues H176 and E178 contribute to the active site. The 193-residue stretch at 203–395 folds into the GMPS ATP-PPase domain; it reads WSMSAYRAKA…LGLPDSFIGR (193 aa). 230–236 is a binding site for ATP; sequence SGGVDSS.

As to quaternary structure, homodimer.

It catalyses the reaction XMP + L-glutamine + ATP + H2O = GMP + L-glutamate + AMP + diphosphate + 2 H(+). The protein operates within purine metabolism; GMP biosynthesis; GMP from XMP (L-Gln route): step 1/1. In terms of biological role, catalyzes the synthesis of GMP from XMP. This is GMP synthase [glutamine-hydrolyzing] from Rhizobium rhizogenes (strain K84 / ATCC BAA-868) (Agrobacterium radiobacter).